The following is a 92-amino-acid chain: Acyl-CoA-binding domain-containing protein 6 (92 aa).

An ACB domain is found at Leu-3–Ser-88. An acyl-CoA-binding positions include Tyr-30 to Lys-34, Lys-52, Lys-56, and Tyr-75.

This sequence belongs to the ACBP family. Interacts with PDLP8. In terms of tissue distribution, mostly expressed in seeds, stems, and siliques, and, to a lower extent, in leaves, flowers, and roots (at protein level). Highly expressed in root and shoot phloem companion cells.

The protein localises to the cytoplasm. It localises to the cell membrane. In terms of biological role, binds medium- and long-chain acyl-CoA esters with very high affinity. May function as an intracellular carrier of acyl-CoA esters. Confers resistance to cold and freezing. Interacts with phosphatidylcholine and derivatives, but not phosphatidic acid and lysophosphatidylcholine. May be involved in phospholipid metabolism. The sequence is that of Acyl-CoA-binding domain-containing protein 6 (ACBP6) from Arabidopsis thaliana (Mouse-ear cress).